Here is a 306-residue protein sequence, read N- to C-terminus: Ubiquitin carboxyl-terminal hydrolase RPN11 (306 aa).

N-acetylmethionine is present on Met-1. The disordered stretch occupies residues Met-1–Arg-20. The region spanning Val-27–Gly-162 is the MPN domain. Zn(2+) contacts are provided by His-109, His-111, and Asp-122. The short motif at His-109–Asp-122 is the JAMM motif element.

It belongs to the peptidase M67A family. Component of the lid subcomplex of the 19S proteasome regulatory particle complex (also named PA700 complex). The 26S proteasome consists of a 20S proteasome core and two 19S regulatory subunits. Interacts directly with RPN8 and STS1. In terms of processing, N-acetylated by NAT3.

The enzyme catalyses Thiol-dependent hydrolysis of ester, thioester, amide, peptide and isopeptide bonds formed by the C-terminal Gly of ubiquitin (a 76-residue protein attached to proteins as an intracellular targeting signal).. Functionally, component of the lid subcomplex of the 26S proteasome, a multiprotein complex involved in the ATP-dependent degradation of ubiquitinated proteins. RPN11 is the only catalytically active member of the lid and serves as the essential deubiquitinase of the proteasome. This is Ubiquitin carboxyl-terminal hydrolase RPN11 (RPN11) from Saccharomyces cerevisiae (strain ATCC 204508 / S288c) (Baker's yeast).